Reading from the N-terminus, the 372-residue chain is Glutamate 5-kinase (372 aa).

K14 is a binding site for ATP. Substrate is bound by residues S54, D141, and N153. 173-174 (TD) serves as a coordination point for ATP. A PUA domain is found at 280 to 358 (RGHVVIDAGA…GEIETVLGYM (79 aa)).

The protein belongs to the glutamate 5-kinase family.

The protein localises to the cytoplasm. It carries out the reaction L-glutamate + ATP = L-glutamyl 5-phosphate + ADP. Its pathway is amino-acid biosynthesis; L-proline biosynthesis; L-glutamate 5-semialdehyde from L-glutamate: step 1/2. Its function is as follows. Catalyzes the transfer of a phosphate group to glutamate to form L-glutamate 5-phosphate. The sequence is that of Glutamate 5-kinase from Burkholderia orbicola (strain AU 1054).